Consider the following 199-residue polypeptide: Recombination protein RecR (199 aa).

The segment at 59 to 74 adopts a C4-type zinc-finger fold; the sequence is CLNCGNVGTSDICALC. The Toprim domain occupies 82 to 176; it reads GELCVVEDVA…KLTSLAQGVP (95 aa).

The protein belongs to the RecR family.

May play a role in DNA repair. It seems to be involved in an RecBC-independent recombinational process of DNA repair. It may act with RecF and RecO. This chain is Recombination protein RecR, found in Ruegeria sp. (strain TM1040) (Silicibacter sp.).